A 489-amino-acid polypeptide reads, in one-letter code: Potassium voltage-gated channel subfamily A member 7 (489 aa).

Residues 176-196 form a helical membrane-spanning segment; that stretch reads VLAVVSVLVILVSIVVFCLET. A glycan (N-linked (GlcNAc...) asparagine) is linked at Asn224. Residues 242 to 262 form a helical membrane-spanning segment; the sequence is FFVVETLCICWFSFELLVRLV. Residue Cys264 is the site of S-palmitoyl cysteine attachment. Residues 274–294 form a helical membrane-spanning segment; the sequence is VMNLIDFVAILPYFVALGTEL. Residues 309–328 traverse the membrane as a helical; Voltage-sensor segment; the sequence is ILRVIRLVRVFRIFKLSRHS. The helical transmembrane segment at 345 to 365 threads the bilayer; the sequence is LGLLIFFLFIGVVLFSSAVYF. A Selectivity filter motif is present at residues 391–396; the sequence is TVGYGD. The helical transmembrane segment at 406–426 threads the bilayer; that stretch reads IVGSLCAIAGVLTISLPVPVI.

Belongs to the potassium channel family. A (Shaker) (TC 1.A.1.2) subfamily. Kv1.7/KCNA7 sub-subfamily. As to quaternary structure, heterotetramer of potassium channel proteins. As to expression, detected in heart, skeletal muscle, brain, and pancreatic islet cells.

The protein resides in the membrane. The enzyme catalyses K(+)(in) = K(+)(out). Functionally, mediates the voltage-dependent potassium ion permeability of excitable membranes. Assuming opened or closed conformations in response to the voltage difference across the membrane, the protein forms a potassium-selective channel through which potassium ions may pass in accordance with their electrochemical gradient. Channels formed by isoform 1 inactivate faster than channels formed by isoform 2. The sequence is that of Potassium voltage-gated channel subfamily A member 7 (Kcna7) from Mus musculus (Mouse).